A 347-amino-acid chain; its full sequence is Histone deacetylase 11 (347 aa).

The interval 14 to 318 is histone deacetylase; that stretch reads KRWPIVYSPR…ARIIADSILN (305 aa). H143 is an active-site residue.

Belongs to the histone deacetylase family. In terms of assembly, interacts with HDAC6.

The protein localises to the nucleus. It catalyses the reaction N(6)-acetyl-L-lysyl-[histone] + H2O = L-lysyl-[histone] + acetate. Its function is as follows. Responsible for the deacetylation of lysine residues on the N-terminal part of the core histones (H2A, H2B, H3 and H4). Histone deacetylation gives a tag for epigenetic repression and plays an important role in transcriptional regulation, cell cycle progression and developmental events. Histone deacetylases act via the formation of large multiprotein complexes. The chain is Histone deacetylase 11 (Hdac11) from Mus musculus (Mouse).